A 77-amino-acid polypeptide reads, in one-letter code: ATP synthase subunit c (77 aa).

2 helical membrane-spanning segments follow: residues 7–27 (AFKY…AALG) and 57–77 (VGLI…ILFL).

It belongs to the ATPase C chain family. In terms of assembly, F-type ATPases have 2 components, F(1) - the catalytic core - and F(0) - the membrane proton channel. F(1) has five subunits: alpha(3), beta(3), gamma(1), delta(1), epsilon(1). F(0) has three main subunits: a(1), b(2) and c(10-14). The alpha and beta chains form an alternating ring which encloses part of the gamma chain. F(1) is attached to F(0) by a central stalk formed by the gamma and epsilon chains, while a peripheral stalk is formed by the delta and b chains.

Its subcellular location is the cell membrane. Functionally, f(1)F(0) ATP synthase produces ATP from ADP in the presence of a proton or sodium gradient. F-type ATPases consist of two structural domains, F(1) containing the extramembraneous catalytic core and F(0) containing the membrane proton channel, linked together by a central stalk and a peripheral stalk. During catalysis, ATP synthesis in the catalytic domain of F(1) is coupled via a rotary mechanism of the central stalk subunits to proton translocation. Its function is as follows. Key component of the F(0) channel; it plays a direct role in translocation across the membrane. A homomeric c-ring of between 10-14 subunits forms the central stalk rotor element with the F(1) delta and epsilon subunits. The polypeptide is ATP synthase subunit c (Lactobacillus helveticus (strain DPC 4571)).